The following is a 301-amino-acid chain: Triplex capsid protein 2 (301 aa).

The protein belongs to the herpesviridae TRX2 protein family. In terms of assembly, interacts with TRX1 and major capisd protein/MCP.

It localises to the virion. It is found in the host nucleus. Structural component of the T=16 icosahedral capsid. The capsid is composed of pentamers and hexamers of major capsid protein/MCP, which are linked together by heterotrimers called triplexes. These triplexes are formed by a single molecule of triplex protein 1/TRX1 and two copies of triplex protein 2/TRX2. Additionally, TRX1 is required for efficient transport of TRX2 to the nucleus, which is the site of capsid assembly. In Homo sapiens (Human), this protein is Triplex capsid protein 2.